Consider the following 514-residue polypeptide: ATP synthase subunit alpha (514 aa).

170 to 177 provides a ligand contact to ATP; sequence GDRQTGKT.

This sequence belongs to the ATPase alpha/beta chains family. F-type ATPases have 2 components, CF(1) - the catalytic core - and CF(0) - the membrane proton channel. CF(1) has five subunits: alpha(3), beta(3), gamma(1), delta(1), epsilon(1). CF(0) has three main subunits: a(1), b(2) and c(9-12). The alpha and beta chains form an alternating ring which encloses part of the gamma chain. CF(1) is attached to CF(0) by a central stalk formed by the gamma and epsilon chains, while a peripheral stalk is formed by the delta and b chains.

Its subcellular location is the cell inner membrane. The catalysed reaction is ATP + H2O + 4 H(+)(in) = ADP + phosphate + 5 H(+)(out). Produces ATP from ADP in the presence of a proton gradient across the membrane. The alpha chain is a regulatory subunit. In Psychrobacter sp. (strain PRwf-1), this protein is ATP synthase subunit alpha.